Consider the following 466-residue polypeptide: F-box/LRR-repeat protein fbxl-1 (466 aa).

Positions 54–100 constitute an F-box domain; the sequence is SLINRVLPKEVLLKVFSFLDTKALCRSAQVCRSWSILALDGSNWQRV. LRR repeat units lie at residues 122 to 147, 148 to 173, 174 to 199, 200 to 225, 226 to 251, 252 to 277, 278 to 303, 304 to 329, 330 to 355, 356 to 381, and 408 to 433; these read GGFL…FTSR, CPNL…LGRY, CHKL…IGDG, CPNL…ILSN, CKSL…VEAH, MGAI…IANG, ATAL…LGQH, SHNL…LARG, CRQL…LANN, CTAL…LASK, and CKAL…FQHH.

As to quaternary structure, component of the SCF (SKP1-CUL1-F-box protein)-type E3 ubiquitin ligase complex. Expressed in neuroglial cells such as the socket cell and sheath cell, neurosecretory motor neurons and regions around the pharynx and anus.

Its subcellular location is the perikaryon. It is found in the cell projection. The protein localises to the dendrite. The protein resides in the cilium. It localises to the axon. Functionally, substrate-recognition component of the SCF (SKP1-CUL1-F-box protein)-type E3 ubiquitin ligase complex. Plays a role in regulating the entry into the dauer state. In hermaphrodites, may play a role in modulating the rate of defecation. In Caenorhabditis elegans, this protein is F-box/LRR-repeat protein fbxl-1.